We begin with the raw amino-acid sequence, 718 residues long: Sec-independent protein translocase protein TatCt (718 aa).

Helical transmembrane passes span 34–54 (VFIV…LYVW), 84–104 (ILLQ…PPFI), 137–157 (LFAA…FAFL), 178–198 (FIFL…AMTG), 214–231 (WRHA…FTPP), 234–254 (FTQI…LYLA), 280–300 (LAGV…YGGV), and 325–345 (LGAF…AYLV). The disordered stretch occupies residues 421-451 (REAEAADAEDEPGELEDRTTRAGGAFVSELT). Residues 425–434 (AADAEDEPGE) are compositionally biased toward acidic residues. The next 6 membrane-spanning stretches (helical) occupy residues 478–498 (AFWV…WLYT), 539–559 (FSTI…VWPA), 572–592 (TVFV…ALGY), 621–641 (FFWL…VPIL), 661–681 (EVTV…ITTM), and 682–702 (FMVT…LFVL).

This sequence belongs to the TatC family. Forms a complex with TatA.

Its subcellular location is the cell membrane. In terms of biological role, part of the twin-arginine translocation (Tat) system that transports large folded proteins containing a characteristic twin-arginine motif in their signal peptide across membranes. In Haloferax volcanii (strain ATCC 29605 / DSM 3757 / JCM 8879 / NBRC 14742 / NCIMB 2012 / VKM B-1768 / DS2) (Halobacterium volcanii), this protein is Sec-independent protein translocase protein TatCt.